A 617-amino-acid polypeptide reads, in one-letter code: 1-deoxy-D-xylulose-5-phosphate synthase (617 aa).

Residues His77 and 118–120 contribute to the thiamine diphosphate site; that span reads GHS. Asp149 is a Mg(2+) binding site. Residues 150–151, Asn178, Tyr287, and Glu368 contribute to the thiamine diphosphate site; that span reads GA. Residue Asn178 participates in Mg(2+) binding.

The protein belongs to the transketolase family. DXPS subfamily. In terms of assembly, homodimer. It depends on Mg(2+) as a cofactor. Thiamine diphosphate is required as a cofactor.

It catalyses the reaction D-glyceraldehyde 3-phosphate + pyruvate + H(+) = 1-deoxy-D-xylulose 5-phosphate + CO2. It functions in the pathway metabolic intermediate biosynthesis; 1-deoxy-D-xylulose 5-phosphate biosynthesis; 1-deoxy-D-xylulose 5-phosphate from D-glyceraldehyde 3-phosphate and pyruvate: step 1/1. Catalyzes the acyloin condensation reaction between C atoms 2 and 3 of pyruvate and glyceraldehyde 3-phosphate to yield 1-deoxy-D-xylulose-5-phosphate (DXP). The protein is 1-deoxy-D-xylulose-5-phosphate synthase of Haemophilus ducreyi (strain 35000HP / ATCC 700724).